Reading from the N-terminus, the 359-residue chain is Protein mab-21-like 2-A (359 aa).

It belongs to the mab-21 family.

Its subcellular location is the nucleus. The protein localises to the cytoplasm. Its function is as follows. Required for normal development of the eye. May promote dorsalization of the developing embryo by antagonizing the ventralizing factor bmp4. Functional antagonism of bmp4 may require interaction with smad1. Required for gastrulation and subsequent neural development. May function as a transcriptional repressor. The protein is Protein mab-21-like 2-A (mab21l2-a) of Xenopus laevis (African clawed frog).